The chain runs to 874 residues: Alanine--tRNA ligase (874 aa).

Zn(2+)-binding residues include H562, H566, C665, and H669.

It belongs to the class-II aminoacyl-tRNA synthetase family. The cofactor is Zn(2+).

The protein localises to the cytoplasm. It catalyses the reaction tRNA(Ala) + L-alanine + ATP = L-alanyl-tRNA(Ala) + AMP + diphosphate. In terms of biological role, catalyzes the attachment of alanine to tRNA(Ala) in a two-step reaction: alanine is first activated by ATP to form Ala-AMP and then transferred to the acceptor end of tRNA(Ala). Also edits incorrectly charged Ser-tRNA(Ala) and Gly-tRNA(Ala) via its editing domain. The protein is Alanine--tRNA ligase of Pseudomonas fluorescens (strain Pf0-1).